The chain runs to 237 residues: Uridylate kinase (237 aa).

12-15 (KLSG) provides a ligand contact to ATP. The tract at residues 20–25 (GDEGFG) is involved in allosteric activation by GTP. Gly-54 serves as a coordination point for UMP. ATP contacts are provided by Gly-55 and Arg-59. UMP is bound by residues Asp-74 and 135-142 (TGSPFFTT). Residues Thr-162, Tyr-168, and Asp-171 each contribute to the ATP site.

This sequence belongs to the UMP kinase family. As to quaternary structure, homohexamer.

The protein localises to the cytoplasm. The enzyme catalyses UMP + ATP = UDP + ADP. Its pathway is pyrimidine metabolism; CTP biosynthesis via de novo pathway; UDP from UMP (UMPK route): step 1/1. Its activity is regulated as follows. Allosterically activated by GTP. Inhibited by UTP. Functionally, catalyzes the reversible phosphorylation of UMP to UDP. This chain is Uridylate kinase, found in Mannheimia succiniciproducens (strain KCTC 0769BP / MBEL55E).